Reading from the N-terminus, the 452-residue chain is Pup--protein ligase (452 aa).

E9 is a Mg(2+) binding site. An ATP-binding site is contributed by R53. Y55 lines the Mg(2+) pocket. D57 serves as the catalytic Proton acceptor. E63 contacts Mg(2+). ATP is bound by residues T66 and W419.

Belongs to the Pup ligase/Pup deamidase family. Pup-conjugating enzyme subfamily.

It carries out the reaction ATP + [prokaryotic ubiquitin-like protein]-L-glutamate + [protein]-L-lysine = ADP + phosphate + N(6)-([prokaryotic ubiquitin-like protein]-gamma-L-glutamyl)-[protein]-L-lysine.. Its pathway is protein degradation; proteasomal Pup-dependent pathway. The protein operates within protein modification; protein pupylation. Its function is as follows. Catalyzes the covalent attachment of the prokaryotic ubiquitin-like protein modifier Pup to the proteasomal substrate proteins, thereby targeting them for proteasomal degradation. This tagging system is termed pupylation. The ligation reaction involves the side-chain carboxylate of the C-terminal glutamate of Pup and the side-chain amino group of a substrate lysine. The polypeptide is Pup--protein ligase (Mycobacterium sp. (strain JLS)).